The following is a 101-amino-acid chain: MSRKSVIQRNLKRISICDRLKSKREKLRAIIKDQSISMNDRFLAQVKLSKLPRDSSYIRIRNRCLITGRPRGCYRKFKVSRIVLRQLGSIGQIPGLTKSSW.

Belongs to the universal ribosomal protein uS14 family. In terms of assembly, part of the 30S ribosomal subunit. Contacts proteins S3 and S10.

Functionally, binds 16S rRNA, required for the assembly of 30S particles and may also be responsible for determining the conformation of the 16S rRNA at the A site. In Ehrlichia ruminantium (strain Welgevonden), this protein is Small ribosomal subunit protein uS14.